Consider the following 926-residue polypeptide: Serine/threonine-protein kinase/endoribonuclease IRE2 (926 aa).

A signal peptide spans 1–34; sequence MASAVRGSRPWPRLGLQLQFAALLLGTLSPQVHT. Residues 35 to 430 are Lumenal-facing; sequence LRPENLLLVS…TPDSYLGLGP (396 aa). Residues 431-451 form a helical membrane-spanning segment; it reads QDLLAASLTAVLLGGWILFVM. The Cytoplasmic portion of the chain corresponds to 452–926; sequence RQQQPQVVEK…RRPCPGATGR (475 aa). Residues 478 to 501 show a composition bias toward polar residues; that stretch reads DAQSLHSGASRRSQKRLQSPSKQA. Residues 478–509 are disordered; that stretch reads DAQSLHSGASRRSQKRLQSPSKQAQPLDDPEA. The region spanning 520 to 781 is the Protein kinase domain; it reads FNPKDVLGRG…APQVLAHPFF (262 aa). ATP-binding positions include 526–534 and lysine 548; that span reads LGRGAGGTF. Catalysis depends on aspartate 637, which acts as the Proton acceptor. In terms of domain architecture, KEN spans 784–912; the sequence is RAKQLQFFQD…ESLFLPYYPP (129 aa).

The protein belongs to the protein kinase superfamily. Ser/Thr protein kinase family. Mg(2+) serves as cofactor. Post-translationally, autophosphorylated.

The protein resides in the endoplasmic reticulum membrane. It carries out the reaction L-seryl-[protein] + ATP = O-phospho-L-seryl-[protein] + ADP + H(+). The catalysed reaction is L-threonyl-[protein] + ATP = O-phospho-L-threonyl-[protein] + ADP + H(+). The kinase domain is activated by trans-autophosphorylation. Kinase activity is required for activation of the endoribonuclease domain. Functionally, induces translational repression through 28S ribosomal RNA cleavage in response to ER stress. Pro-apoptotic. Appears to play no role in the unfolded-protein response, unlike closely related proteins. This is Serine/threonine-protein kinase/endoribonuclease IRE2 from Homo sapiens (Human).